Consider the following 503-residue polypeptide: MEEHGVTQTEHMATIEAHAVAQQVQQVHVATYTEHSMLSADEDSPSSPEDTSYDDSDILNSTAADEVTAHLAAAGPVGMAAAAAVATGKKRKRPHVFESNPSIRKRQQTRLLRKLRATLDEYTTRVGQQAIVLCISPSKPNPVFKVFGAAPLENVVRKYKSMILEDLESALAEHAPAPQEVNSELPPLTIDGIPVSVDKMTQAQLRAFIPEMLKYSTGRGKPGWGKESCKPIWWPEDIPWANVRSDVRTEEQKQRVSWTQALRTIVKNCYKQHGREDLLYAFEDQQTQTQATATHSIAHLVPSQTVVQTFSNPDGTVSLIQVGTGATVATLADASELPTTVTVAQVNYSAVADGEVEQNWATLQGGEMTIQTTQASEATQAVASLAEAAVAASQEMQQGATVTMALNSEAAAHAVATLAEATLQGGGQIVLSGETAAAVGALTGVQDANGLVQIPVSMYQTVVTSLAQGNGPVQVAMAPVTTRISDSAVTMDGQAVEVVTLEQ.

Residues 1–78 (MEEHGVTQTE…AHLAAAGPVG (78 aa)) are dimerization. Residues 36-57 (SMLSADEDSPSSPEDTSYDDSD) form a disordered region. A phosphoserine; by CK2 mark is found at serine 39, serine 44, serine 46, serine 47, and serine 52. Positions 88-116 (GKKRKRPHVFESNPSIRKRQQTRLLRKLR) match the Nuclear localization signal motif. The DNA-binding element occupies 109–305 (TRLLRKLRAT…SIAHLVPSQT (197 aa)). Lysine 139 is covalently cross-linked (Glycyl lysine isopeptide (Lys-Gly) (interchain with G-Cter in SUMO2)). The required for transcriptional activation stretch occupies residues 301–476 (VPSQTVVQTF…AQGNGPVQVA (176 aa)).

The protein belongs to the NRF1/Ewg family. In terms of assembly, homodimer. Binds DNA as a dimer. Interacts with PPRC1. Phosphorylation enhances DNA binding. Ubiquitously expressed with strongest expression in skeletal muscle.

The protein resides in the nucleus. Functionally, transcription factor that activates the expression of the EIF2S1 (EIF2-alpha) gene. Links the transcriptional modulation of key metabolic genes to cellular growth and development. Implicated in the control of nuclear genes required for respiration, heme biosynthesis, and mitochondrial DNA transcription and replication. The protein is Nuclear respiratory factor 1 (NRF1) of Homo sapiens (Human).